A 1221-amino-acid polypeptide reads, in one-letter code: DNA-directed RNA polymerase subunit beta' (1221 aa).

Zn(2+) is bound by residues cysteine 60, cysteine 62, cysteine 75, and cysteine 78. Mg(2+) is bound by residues aspartate 449, aspartate 451, and aspartate 453. Zn(2+) is bound by residues cysteine 820, cysteine 894, cysteine 901, and cysteine 904.

It belongs to the RNA polymerase beta' chain family. As to quaternary structure, the RNAP catalytic core consists of 2 alpha, 1 beta, 1 beta' and 1 omega subunit. When a sigma factor is associated with the core the holoenzyme is formed, which can initiate transcription. The cofactor is Mg(2+). Zn(2+) serves as cofactor.

It carries out the reaction RNA(n) + a ribonucleoside 5'-triphosphate = RNA(n+1) + diphosphate. DNA-dependent RNA polymerase catalyzes the transcription of DNA into RNA using the four ribonucleoside triphosphates as substrates. This Ligilactobacillus salivarius (strain UCC118) (Lactobacillus salivarius) protein is DNA-directed RNA polymerase subunit beta'.